The primary structure comprises 404 residues: Indole-3-acetate O-methyltransferase 1 (404 aa).

S-adenosyl-L-methionine-binding positions include 82–83, Asn-88, Asp-120, 169–171, and 186–188; these read GC, TFY, and TFS. 6 residues coordinate Mg(2+): Asn-208, Val-212, Arg-294, Asp-295, Phe-297, and Asn-298.

This sequence belongs to the methyltransferase superfamily. SABATH family. Homodimer. The cofactor is Mg(2+). In terms of tissue distribution, expressed in roots and panicles.

The enzyme catalyses (indol-3-yl)acetate + S-adenosyl-L-methionine = methyl (indol-3-yl)acetate + S-adenosyl-L-homocysteine. Catalyzes the methylation of the free carboxyl end of the plant hormone indole-3-acetic acid (IAA). Converts IAA to IAA methyl ester (MeIAA). Regulates IAA activities by IAA methylation. Methylation of IAA plays an important role in regulating plant development and auxin homeostasis. MeIAA seems to be an inactive form of IAA. This Oryza sativa subsp. japonica (Rice) protein is Indole-3-acetate O-methyltransferase 1 (IAMT1).